The sequence spans 445 residues: 2-oxoisovalerate dehydrogenase subunit alpha, mitochondrial (445 aa).

A mitochondrion-targeting transit peptide spans 1–45 (MAVAIAAARVWRPNRGLSQAALLLLWRPGARGLARSHPHRQQQQF). Residues Y158 and R159 each coordinate thiamine diphosphate. S206 contributes to the K(+) binding site. A thiamine diphosphate-binding site is contributed by S207. The K(+) site is built by P208, T211, and Q212. Residue E238 participates in Mg(2+) binding. G239, A240, and R265 together coordinate thiamine diphosphate. The Mg(2+) site is built by N267 and Y269. Residue H336 participates in thiamine diphosphate binding. S337 is modified (phosphoserine; by BCKDK). T338 carries the phosphothreonine modification. Residues S339 and S347 each carry the phosphoserine modification. N6-acetyllysine; alternate is present on K356. N6-succinyllysine; alternate is present on K356. N6-succinyllysine is present on K380.

Belongs to the BCKDHA family. As to quaternary structure, heterotetramer of 2 alpha/BCKDHA and 2 beta chains/BCKDHB that forms the branched-chain alpha-keto acid decarboxylase (E1) component of the BCKD complex. The branched-chain alpha-ketoacid dehydrogenase is a large complex composed of three major building blocks E1, E2 and E3. It is organized around E2, a 24-meric cubic core composed of DBT, to which are associated 6 to 12 copies of E1, and approximately 6 copies of the dehydrogenase E3, a DLD dimer. Interacts with PPM1K. Thiamine diphosphate is required as a cofactor. The cofactor is Mg(2+). Phosphorylated at Ser-337 by BCKDK and dephosphorylated by protein phosphatase PPM1K.

Its subcellular location is the mitochondrion matrix. The enzyme catalyses N(6)-[(R)-lipoyl]-L-lysyl-[protein] + 3-methyl-2-oxobutanoate + H(+) = N(6)-[(R)-S(8)-2-methylpropanoyldihydrolipoyl]-L-lysyl-[protein] + CO2. Functionally, together with BCKDHB forms the heterotetrameric E1 subunit of the mitochondrial branched-chain alpha-ketoacid dehydrogenase (BCKD) complex. The BCKD complex catalyzes the multi-step oxidative decarboxylation of alpha-ketoacids derived from the branched-chain amino-acids valine, leucine and isoleucine producing CO2 and acyl-CoA which is subsequently utilized to produce energy. The E1 subunit catalyzes the first step with the decarboxylation of the alpha-ketoacid forming an enzyme-product intermediate. A reductive acylation mediated by the lipoylamide cofactor of E2 extracts the acyl group from the E1 active site for the next step of the reaction. This Macaca fascicularis (Crab-eating macaque) protein is 2-oxoisovalerate dehydrogenase subunit alpha, mitochondrial (BCKDHA).